A 287-amino-acid chain; its full sequence is Putative DNA-3-methyladenine glycosylase YfjP (287 aa).

Residue Asp242 is the Proton acceptor of the active site.

This sequence belongs to the alkylbase DNA glycosidase AlkA family.

The catalysed reaction is Hydrolysis of alkylated DNA, releasing 3-methyladenine, 3-methylguanine, 7-methylguanine and 7-methyladenine.. Its function is as follows. Hydrolysis of the deoxyribose N-glycosidic bond to excise 3-methyladenine, 3-methylguanine, 7-methylguanine, O2-methylthymine, and O2-methylcytosine from the damaged DNA polymer formed by alkylation lesions. The chain is Putative DNA-3-methyladenine glycosylase YfjP (yfjP) from Bacillus subtilis (strain 168).